Consider the following 109-residue polypeptide: Co-chaperonin GroES (109 aa).

Belongs to the GroES chaperonin family. As to quaternary structure, heptamer of 7 subunits arranged in a ring. Interacts with the chaperonin GroEL.

It is found in the cytoplasm. Functionally, together with the chaperonin GroEL, plays an essential role in assisting protein folding. The GroEL-GroES system forms a nano-cage that allows encapsulation of the non-native substrate proteins and provides a physical environment optimized to promote and accelerate protein folding. GroES binds to the apical surface of the GroEL ring, thereby capping the opening of the GroEL channel. This Methanosarcina acetivorans (strain ATCC 35395 / DSM 2834 / JCM 12185 / C2A) protein is Co-chaperonin GroES.